A 205-amino-acid polypeptide reads, in one-letter code: Ypt/Rab-type GTPase avaA (205 aa).

GTP contacts are provided by residues 17–23 (SGVGKTS), 33–40 (FSGSYKAT), Gly66, 125–128 (NKID), and 157–159 (SAK). The short motif at 37-45 (YKATIGADF) is the Effector region element. S-geranylgeranyl cysteine attachment occurs at residues Cys203 and Cys205. Cys205 is modified (cysteine methyl ester).

This sequence belongs to the small GTPase superfamily. Rab family.

Rab activation is generally mediated by a guanine exchange factor (GEF), while inactivation through hydrolysis of bound GTP is catalyzed by a GTPase activating protein (GAP). Ypt/Rab-type GTPases are key regulators of membrane trafficking and intracellular vesicular transport. They act as molecular switches that convert between GTP-bound and GDP-bound states, and regulate virtually all steps of membrane traffic from the formation of the transport vesicle at the donor membrane to its fusion at the target membrane. In the GDP-bound state, Ypt proteins are predominantly cytosolic, solubilized through the interaction with a GDP dissociation inhibitor (GDI). In the GTP-bound state, the proteins are membrane bound and interact with specific effector proteins that select cargo, promote vesicle movement, or verify the correct site of fusion. AvaA functions in vacuolar biogenesis. The protein is Ypt/Rab-type GTPase avaA of Emericella nidulans (strain FGSC A4 / ATCC 38163 / CBS 112.46 / NRRL 194 / M139) (Aspergillus nidulans).